A 150-amino-acid chain; its full sequence is Large ribosomal subunit protein uL15 (150 aa).

The tract at residues 1-57 (MTLRLESLKPNKGARRRKLRKGRGIAAGQGASCGFGMRGQKSRSGRPTRPGFEGGQM) is disordered. The segment covering 12–23 (KGARRRKLRKGR) has biased composition (basic residues). The span at 25–37 (IAAGQGASCGFGM) shows a compositional bias: gly residues.

This sequence belongs to the universal ribosomal protein uL15 family. In terms of assembly, part of the 50S ribosomal subunit.

In terms of biological role, binds to the 23S rRNA. The protein is Large ribosomal subunit protein uL15 of Synechococcus sp. (strain CC9311).